We begin with the raw amino-acid sequence, 478 residues long: MAGDKKFVEDITPMDEDFAQWYTDIVKKAELADYSSIRGCMIIRPNGYGIWENIQKYVDTKLKEYGHENVSMPIFIPENLLQKEKDHVEGFAPEVAWVTHGGDDELAERLCVRPTSETLFCEHYAKIVQSYKDLPKLYNQWCSVVRWEKTTRPFLRTTEFLWQEGHTIHETKEEAESHSLKILNMYSRLCEDMLAMPVVMGKKTDKEKFAGADDTYTIESLMHDGKALQAGTSHYLGQNFSKAFAIQFSDRNGKLDYPHYTTWAVTTRLIGAIIMVHGDNSGLKLPPRIAPTQAVIIPVAQHKEGVLEKAKELKEKLAKVVRVKLDDSDKMPGWKYSEYEMKGIPLRIEIGPKDIEKNQAVLVRRDNREKTIVSLDEIEIKVQEMLDIIHNSMLEEAKKTRDEKTYVATNMEEFEDTIENKPGFIKAMWCGDRACEDKIREVTGATSRCMPFEQEVVSDTCVCCGKKAKNLVYWGRAY.

This sequence belongs to the class-II aminoacyl-tRNA synthetase family. ProS type 3 subfamily. As to quaternary structure, homodimer.

It is found in the cytoplasm. The catalysed reaction is tRNA(Pro) + L-proline + ATP = L-prolyl-tRNA(Pro) + AMP + diphosphate. Catalyzes the attachment of proline to tRNA(Pro) in a two-step reaction: proline is first activated by ATP to form Pro-AMP and then transferred to the acceptor end of tRNA(Pro). This chain is Proline--tRNA ligase, found in Clostridium botulinum (strain ATCC 19397 / Type A).